Reading from the N-terminus, the 435-residue chain is Enolase (435 aa).

Gln-167 contributes to the (2R)-2-phosphoglycerate binding site. Catalysis depends on Glu-209, which acts as the Proton donor. Residues Asp-246, Glu-291, and Asp-318 each contribute to the Mg(2+) site. Lys-343, Arg-372, Ser-373, and Lys-394 together coordinate (2R)-2-phosphoglycerate. The active-site Proton acceptor is Lys-343.

This sequence belongs to the enolase family. In terms of assembly, component of the RNA degradosome, a multiprotein complex involved in RNA processing and mRNA degradation. Requires Mg(2+) as cofactor.

The protein localises to the cytoplasm. Its subcellular location is the secreted. The protein resides in the cell surface. It catalyses the reaction (2R)-2-phosphoglycerate = phosphoenolpyruvate + H2O. It participates in carbohydrate degradation; glycolysis; pyruvate from D-glyceraldehyde 3-phosphate: step 4/5. Functionally, catalyzes the reversible conversion of 2-phosphoglycerate (2-PG) into phosphoenolpyruvate (PEP). It is essential for the degradation of carbohydrates via glycolysis. This is Enolase from Psychromonas ingrahamii (strain DSM 17664 / CCUG 51855 / 37).